The chain runs to 97 residues: Aspartyl/glutamyl-tRNA(Asn/Gln) amidotransferase subunit C (97 aa).

Low complexity predominate over residues 74 to 84; it reads TPEEATAAAPA. The tract at residues 74–97 is disordered; it reads TPEEATAAAPAREGTAFKVPRIIE.

This sequence belongs to the GatC family. In terms of assembly, heterotrimer of A, B and C subunits.

The enzyme catalyses L-glutamyl-tRNA(Gln) + L-glutamine + ATP + H2O = L-glutaminyl-tRNA(Gln) + L-glutamate + ADP + phosphate + H(+). The catalysed reaction is L-aspartyl-tRNA(Asn) + L-glutamine + ATP + H2O = L-asparaginyl-tRNA(Asn) + L-glutamate + ADP + phosphate + 2 H(+). In terms of biological role, allows the formation of correctly charged Asn-tRNA(Asn) or Gln-tRNA(Gln) through the transamidation of misacylated Asp-tRNA(Asn) or Glu-tRNA(Gln) in organisms which lack either or both of asparaginyl-tRNA or glutaminyl-tRNA synthetases. The reaction takes place in the presence of glutamine and ATP through an activated phospho-Asp-tRNA(Asn) or phospho-Glu-tRNA(Gln). The sequence is that of Aspartyl/glutamyl-tRNA(Asn/Gln) amidotransferase subunit C from Anaeromyxobacter dehalogenans (strain 2CP-1 / ATCC BAA-258).